The primary structure comprises 131 residues: Small ribosomal subunit protein uS11 (131 aa).

Belongs to the universal ribosomal protein uS11 family. In terms of assembly, part of the 30S ribosomal subunit. Interacts with proteins S7 and S18. Binds to IF-3.

Its function is as follows. Located on the platform of the 30S subunit, it bridges several disparate RNA helices of the 16S rRNA. Forms part of the Shine-Dalgarno cleft in the 70S ribosome. This is Small ribosomal subunit protein uS11 from Chromobacterium violaceum (strain ATCC 12472 / DSM 30191 / JCM 1249 / CCUG 213 / NBRC 12614 / NCIMB 9131 / NCTC 9757 / MK).